Here is a 276-residue protein sequence, read N- to C-terminus: Large ribosomal subunit protein uL2 (276 aa).

The tract at residues 223 to 276 is disordered; that stretch reads GVAMNPVDHPHGGGEGRGKGHHPTSPWGLPTKGYKTRRGKRPSDKFIVRRRNEA. Composition is skewed to basic and acidic residues over residues 230-240 and 263-276; these read DHPHGGGEGRG and RPSD…RNEA.

It belongs to the universal ribosomal protein uL2 family. Part of the 50S ribosomal subunit. Forms a bridge to the 30S subunit in the 70S ribosome.

Functionally, one of the primary rRNA binding proteins. Required for association of the 30S and 50S subunits to form the 70S ribosome, for tRNA binding and peptide bond formation. It has been suggested to have peptidyltransferase activity; this is somewhat controversial. Makes several contacts with the 16S rRNA in the 70S ribosome. This is Large ribosomal subunit protein uL2 from Thermotoga petrophila (strain ATCC BAA-488 / DSM 13995 / JCM 10881 / RKU-1).